The chain runs to 316 residues: Ribosomal RNA small subunit methyltransferase H (316 aa).

Residues 35–37 (GGH), Asp55, Phe79, Asp101, and Gln108 contribute to the S-adenosyl-L-methionine site.

The protein belongs to the methyltransferase superfamily. RsmH family.

It is found in the cytoplasm. The catalysed reaction is cytidine(1402) in 16S rRNA + S-adenosyl-L-methionine = N(4)-methylcytidine(1402) in 16S rRNA + S-adenosyl-L-homocysteine + H(+). Functionally, specifically methylates the N4 position of cytidine in position 1402 (C1402) of 16S rRNA. The sequence is that of Ribosomal RNA small subunit methyltransferase H from Aliivibrio salmonicida (strain LFI1238) (Vibrio salmonicida (strain LFI1238)).